The chain runs to 493 residues: Poly(ribitol-phosphate) alpha-N-acetylglucosaminyltransferase (493 aa).

UDP-N-acetyl-alpha-D-glucosamine is bound by residues G17, K59, H249, R326, K331, T383, and 403-411 (EGQGLSMIE).

Belongs to the glycosyltransferase group 1 family. As to quaternary structure, homotrimer.

The protein resides in the cytoplasm. It catalyses the reaction 4-O-[(D-ribitylphospho)(n)-di{(2R)-glycerylphospho}]-N-acetyl-beta-D-mannosaminyl-(1-&gt;4)-N-acetyl-alpha-D-glucosaminyl di-trans,octa-cis-undecaprenyl diphosphate + n UDP-N-acetyl-alpha-D-glucosamine = 4-O-([2-N-acetyl-alpha-D-glucosaminyl-1-D-ribitylphospho](n)-di{[2R]-1-glycerylphospho})-N-acetyl-beta-D-mannosaminyl-(1-&gt;4)-N-acetyl-alpha-D-glucosaminyl di-trans,octa-cis-undecaprenyl diphosphate + n UDP + n H(+). It functions in the pathway cell wall biogenesis; poly(ribitol phosphate) teichoic acid biosynthesis. Functionally, attaches N-acetyl-alpha-D-glucosamine residues to poly(RboP)-wall teichoic acids (WTAs). In Staphylococcus aureus (strain COL), this protein is Poly(ribitol-phosphate) alpha-N-acetylglucosaminyltransferase.